The sequence spans 244 residues: tRNA pseudouridine synthase A (244 aa).

Catalysis depends on D52, which acts as the Nucleophile. Y111 is a substrate binding site.

The protein belongs to the tRNA pseudouridine synthase TruA family. As to quaternary structure, homodimer.

The catalysed reaction is uridine(38/39/40) in tRNA = pseudouridine(38/39/40) in tRNA. Formation of pseudouridine at positions 38, 39 and 40 in the anticodon stem and loop of transfer RNAs. The chain is tRNA pseudouridine synthase A from Thermosipho melanesiensis (strain DSM 12029 / CIP 104789 / BI429).